Reading from the N-terminus, the 495-residue chain is Probable cobyric acid synthase (495 aa).

The region spanning 256–441 (DVDIAVIRLT…LHGLFDNVNI (186 aa)) is the GATase cobBQ-type domain. Cysteine 334 acts as the Nucleophile in catalysis. Residue histidine 433 is part of the active site.

The protein belongs to the CobB/CobQ family. CobQ subfamily.

It functions in the pathway cofactor biosynthesis; adenosylcobalamin biosynthesis. In terms of biological role, catalyzes amidations at positions B, D, E, and G on adenosylcobyrinic A,C-diamide. NH(2) groups are provided by glutamine, and one molecule of ATP is hydrogenolyzed for each amidation. The polypeptide is Probable cobyric acid synthase (Methanococcoides burtonii (strain DSM 6242 / NBRC 107633 / OCM 468 / ACE-M)).